The following is a 533-amino-acid chain: Apolipoprotein N-acyltransferase (533 aa).

6 consecutive transmembrane segments (helical) span residues 17–37 (ALLAILAGAIGVLALPPFGFF), 74–94 (WLFGFGYFVAGLWWLGHALLI), 105–125 (LAILGLPAFLAIFYGVAAVLA), 127–147 (LLWSDGMGRIAALAFGFGLLE), 178–198 (VIGVLGVTVLAVFVFAAPALL), and 205–225 (VPGIGLAVLIAAAHFAYGYYA). Positions 245-495 (VQPAIDQEAK…QGFVDSTLSG (251 aa)) constitute a CN hydrolase domain. E290 (proton acceptor) is an active-site residue. K354 is a catalytic residue. C407 (nucleophile) is an active-site residue. Residues 509–529 (YFWLIIGIVGMIAVISRMGFI) traverse the membrane as a helical segment.

This sequence belongs to the CN hydrolase family. Apolipoprotein N-acyltransferase subfamily.

It localises to the cell inner membrane. The enzyme catalyses N-terminal S-1,2-diacyl-sn-glyceryl-L-cysteinyl-[lipoprotein] + a glycerophospholipid = N-acyl-S-1,2-diacyl-sn-glyceryl-L-cysteinyl-[lipoprotein] + a 2-acyl-sn-glycero-3-phospholipid + H(+). The protein operates within protein modification; lipoprotein biosynthesis (N-acyl transfer). Its function is as follows. Catalyzes the phospholipid dependent N-acylation of the N-terminal cysteine of apolipoprotein, the last step in lipoprotein maturation. The sequence is that of Apolipoprotein N-acyltransferase from Rhizobium rhizogenes (strain K84 / ATCC BAA-868) (Agrobacterium radiobacter).